The chain runs to 158 residues: Regulator of sigma D (158 aa).

Belongs to the Rsd/AlgQ family. As to quaternary structure, interacts with RpoD.

Its subcellular location is the cytoplasm. In terms of biological role, binds RpoD and negatively regulates RpoD-mediated transcription activation by preventing the interaction between the primary sigma factor RpoD with the catalytic core of the RNA polymerase and with promoter DNA. May be involved in replacement of the RNA polymerase sigma subunit from RpoD to RpoS during the transition from exponential growth to the stationary phase. In Escherichia fergusonii (strain ATCC 35469 / DSM 13698 / CCUG 18766 / IAM 14443 / JCM 21226 / LMG 7866 / NBRC 102419 / NCTC 12128 / CDC 0568-73), this protein is Regulator of sigma D.